Consider the following 351-residue polypeptide: MIPEERLDQITQRFQYLEAAMADGASGSDIAALAKEYSDLRPVVEQIAAWRQLCADMDEARAMLSDPDMKALAEEELPLLKARLPEAEQALQLALLPKDAADARPAMLEIRPGTGGDEAALFAGDLLRMYQRYAEARGWKLELIELQETELGGIKEVVARISGENVFARLKYESGVHRVQRVPETESGGRIHTSAATVAVLPEAQDVDIQIDPGDIRIDTMRSSGAGGQHVNTTDSAVRITHLPSGIVVTSSEKSQHRNREIAMQVLKTRLYDLERQRLDRERSASRSAQVGTGDRSERIRTYNFPQGRMTDHRINLTLYKLDAVMQGDLDEVIDALAADGQARMLAEMGQ.

The residue at position 229 (Gln-229) is an N5-methylglutamine.

It belongs to the prokaryotic/mitochondrial release factor family. In terms of processing, methylated by PrmC. Methylation increases the termination efficiency of RF1.

Its subcellular location is the cytoplasm. Peptide chain release factor 1 directs the termination of translation in response to the peptide chain termination codons UAG and UAA. This chain is Peptide chain release factor 1, found in Ruegeria pomeroyi (strain ATCC 700808 / DSM 15171 / DSS-3) (Silicibacter pomeroyi).